A 73-amino-acid chain; its full sequence is U3-agatoxin-Ao1j (73 aa).

The first 20 residues, 1–20 (MRTIISLLLLSAMVFAVIEA), serve as a signal peptide directing secretion. The propeptide occupies 21–34 (ISLEEGLQLFEGER). 4 cysteine pairs are disulfide-bonded: C36–C52, C43–C57, C51–C67, and C59–C65. Serine amide is present on S71.

It belongs to the neurotoxin 07 (Beta/delta-agtx) family. 03 (aga-4) subfamily. Aga sub-subfamily. As to expression, expressed by the venom gland.

The protein localises to the secreted. In terms of biological role, insecticidal neurotoxin that induces an irreversible spastic paralysis when injected into insects. Modifies presynaptic voltage-gated sodium channels (Nav), causing them to open at the normal resting potential of the nerve. This leads to spontaneous release of neurotransmitter and repetitive action potentials in motor neurons. The chain is U3-agatoxin-Ao1j from Agelena orientalis (Funnel-web spider).